The sequence spans 151 residues: Large ribosomal subunit protein bL9 (151 aa).

This sequence belongs to the bacterial ribosomal protein bL9 family.

Functionally, binds to the 23S rRNA. This is Large ribosomal subunit protein bL9 from Francisella tularensis subsp. novicida (strain U112).